Here is a 512-residue protein sequence, read N- to C-terminus: Alpha-amylase (512 aa).

An N-terminal signal peptide occupies residues 1 to 29; it reads MKQQKRLYARLLTLLFALIFLLPHSAAAA. Ca(2+) contacts are provided by Asn-133, Asp-190, Ala-210, Asp-212, Asp-223, Asp-229, Asp-231, and Asp-233. Asp-190 serves as a coordination point for Na(+). Na(+)-binding residues include Asp-212, Asp-223, and Asp-229. Asp-260 functions as the Nucleophile in the catalytic mechanism. Residue His-264 participates in Ca(2+) binding. Residue Glu-290 is the Proton donor of the active site. Residues Gly-329, Tyr-331, His-435, Asp-436, and Asp-459 each contribute to the Ca(2+) site.

It belongs to the glycosyl hydrolase 13 family. Monomer. Ca(2+) serves as cofactor. Requires Na(+) as cofactor.

The protein localises to the secreted. The catalysed reaction is Endohydrolysis of (1-&gt;4)-alpha-D-glucosidic linkages in polysaccharides containing three or more (1-&gt;4)-alpha-linked D-glucose units.. The protein is Alpha-amylase (amyS) of Bacillus licheniformis.